The chain runs to 198 residues: PEP-dependent dihydroxyacetone kinase 1, ADP-binding subunit DhaL (198 aa).

The 189-residue stretch at aspartate 6–glutamine 194 folds into the DhaL domain. Residues aspartate 30, aspartate 35, and aspartate 37 each coordinate Mg(2+). Residues histidine 38–asparagine 41, alanine 79–serine 80, glycine 120, methionine 129, arginine 166, and aspartate 179–glycine 181 contribute to the ADP site.

In terms of assembly, homodimer. The dihydroxyacetone kinase complex is composed of a homodimer of DhaM, a homodimer of DhaK and the subunit DhaL. Requires Mg(2+) as cofactor.

Its subcellular location is the cytoplasm. It carries out the reaction dihydroxyacetone + phosphoenolpyruvate = dihydroxyacetone phosphate + pyruvate. The protein operates within polyol metabolism; glycerol degradation. Its function is as follows. ADP-binding subunit of the dihydroxyacetone kinase, which is responsible for the phosphoenolpyruvate (PEP)-dependent phosphorylation of dihydroxyacetone. DhaL-ADP is converted to DhaL-ATP via a phosphoryl group transfer from DhaM and transmits it to dihydroxyacetone binds to DhaK. This chain is PEP-dependent dihydroxyacetone kinase 1, ADP-binding subunit DhaL, found in Listeria innocua serovar 6a (strain ATCC BAA-680 / CLIP 11262).